We begin with the raw amino-acid sequence, 919 residues long: Aminodeoxychorismate synthase, chloroplastic (919 aa).

The transit peptide at 1 to 45 (MNMNFSFCSTSSELSYPSENVLRFSVASRLFSPKWKKSFISLPCR) directs the protein to the chloroplast. One can recognise a Glutamine amidotransferase type-1 domain in the interval 86 to 342 (RTLLIDNYDS…KDITVNYWSR (257 aa)). Cysteine 172 acts as the Nucleophile in catalysis. Residues histidine 316 and glutamate 318 contribute to the active site. Residues 436-910 (IFMELFGKNR…KTRAPANAVM (475 aa)) form a PABB component region.

In the C-terminal section; belongs to the anthranilate synthase component I family.

It is found in the plastid. The protein localises to the chloroplast. The enzyme catalyses chorismate + L-glutamine = 4-amino-4-deoxychorismate + L-glutamate. It functions in the pathway cofactor biosynthesis; tetrahydrofolate biosynthesis; 4-aminobenzoate from chorismate: step 1/2. With respect to regulation, activated by chorismate and inhibited by dihydrofolate and methotrexate. In terms of biological role, bifunctional enzyme that catalyzes the biosynthesis of 4-amino-4-deoxychorismate (ADC) from chorismate and glutamine. In the first step, a glutamine amidotransferase generates ammonia that is channelled between the binding sites of glutamine and chorismate and used along with chorismate in the second step, catalyzed by aminodeoxychorismate synthase, to produce ADC. Required for the synthesis of 4-aminobenzoate (PABA), an important component in tetrahydrofolate biosynthesis. Does not possess ADC lyase activity. This Arabidopsis thaliana (Mouse-ear cress) protein is Aminodeoxychorismate synthase, chloroplastic (ADCS).